The chain runs to 523 residues: Leucine-rich repeat-containing protein 27 (523 aa).

Residues 1–26 (MEDTSPQAVAEKAAKDPKAAKDLKDD) form a disordered region. The span at 12–26 (KAAKDPKAAKDLKDD) shows a compositional bias: basic and acidic residues. LRR repeat units follow at residues 55–76 (SSPVLDLSQRGLRHLGKFFKIP), 77–98 (NLQQLHLQRNLLREIPEDFFQL), 101–122 (NLTWLDLRYNKIKVLPSGIGSH), 124–145 (HLKTLLLERNPIKMLPVELGQV), and 147–168 (TLTALNLRHCPLEFPPRLIVQK). Disordered stretches follow at residues 206-236 (QYPVLPLPRKGSPSENSLNDPDQEKEKADFF) and 372-394 (REQTQHMRTRRELSKLQPPHSNM). 2 stretches are compositionally biased toward basic and acidic residues: residues 227-236 (DQEKEKADFF) and 372-385 (REQTQHMRTRRELS). Coiled-coil stretches lie at residues 335–374 (VHANRMEDTHKAALQELQEKETVLEQRRRDKRALQEWREQ) and 463–494 (MQDIKTANQDLETTKKLQEELRKLKVEMTLNK). The tract at residues 503 to 523 (GNLSLHPPASQPQNIFFNTKS) is disordered. Polar residues predominate over residues 513-523 (QPQNIFFNTKS).

This is Leucine-rich repeat-containing protein 27 (Lrrc27) from Mus musculus (Mouse).